Here is a 283-residue protein sequence, read N- to C-terminus: Probable endonuclease 4 (283 aa).

9 residues coordinate Zn(2+): histidine 69, histidine 109, glutamate 145, aspartate 179, histidine 182, histidine 216, aspartate 229, histidine 231, and glutamate 261.

The protein belongs to the AP endonuclease 2 family. It depends on Zn(2+) as a cofactor.

The enzyme catalyses Endonucleolytic cleavage to 5'-phosphooligonucleotide end-products.. Functionally, endonuclease IV plays a role in DNA repair. It cleaves phosphodiester bonds at apurinic or apyrimidinic (AP) sites, generating a 3'-hydroxyl group and a 5'-terminal sugar phosphate. This Prosthecochloris aestuarii (strain DSM 271 / SK 413) protein is Probable endonuclease 4.